We begin with the raw amino-acid sequence, 998 residues long: Collagen alpha-1(I) chain (998 aa).

The interval 1 to 998 (GGVSVPGPMG…PGPPGPPGPP (998 aa)) is disordered. 9 positions are modified to 4-hydroxyproline: proline 18, proline 21, proline 24, proline 33, proline 48, proline 63, proline 69, proline 78, and proline 84. Residues 26-39 (PQGFQGPPGSSGPM) show a composition bias toward low complexity. Residues 51-65 (NGDDGEAGKPGRPGE) are compositionally biased toward basic and acidic residues. Residue lysine 87 is modified to 5-hydroxylysine; alternate. A glycan (O-linked (Gal...) hydroxylysine; alternate) is linked at lysine 87. Serine 93 bears the Phosphoserine mark. Residues 101–115 (DAGPAGPKQMGPRGL) are compositionally biased toward low complexity. Residues proline 116, proline 122, proline 143, proline 152, proline 155, proline 182, proline 185, proline 197, proline 203, proline 212, proline 218, proline 221, and proline 236 each carry the 4-hydroxyproline modification. Low complexity predominate over residues 122 to 140 (PGASGPAGARGNDGATGAA). Pro residues predominate over residues 142 to 154 (PPGPTGPAGPPGF). The segment covering 188–238 (AGAAGPAGNPGADGQPGAKGANGAPGIAGAPGFPGARGPSGPQGPSGAPGP) has biased composition (low complexity). Lysine 239 carries the post-translational modification 5-hydroxylysine. A 4-hydroxyproline mark is found at proline 245, proline 248, proline 260, proline 269, proline 284, proline 290, proline 299, and proline 305. Over residues 294 to 303 (GERGGPGSRG) the composition is skewed to gly residues. Residue lysine 314 is modified to 5-hydroxylysine. 4-hydroxyproline is present on residues proline 323, proline 332, proline 338, proline 344, proline 353, proline 356, proline 365, proline 374, proline 380, proline 392, proline 401, proline 410, proline 413, proline 431, proline 449, proline 455, proline 461, proline 467, proline 473, proline 479, proline 491, proline 500, proline 511, proline 523, proline 526, proline 532, proline 538, and proline 547. A compositionally biased stretch (low complexity) spans 347–401 (KGLTGSPGSPGPDGKTGPPGPAGQDGRPGPAGPPGARGQAGVMGFPGPKGAAGEP). Positions 443–470 (QGPAGSPGFQGLPGPAGPPGEAGKPGEQ) are enriched in low complexity. Residues 513-535 (NDGAKGDAGAPGAPGSQGAPGLQ) show a composition bias toward low complexity. At lysine 559 the chain carries 5-hydroxylysine. Proline 565 and proline 580 each carry 4-hydroxyproline. Residues 592 to 606 (TGPSGPAGPTGARGA) are compositionally biased toward low complexity. A Phosphoserine modification is found at serine 595. 4-hydroxyproline is present on residues proline 607, proline 613, proline 616, proline 625, proline 631, proline 649, proline 658, and proline 667. Residues 619–646 (AGFAGPPGADGQPGAKGEPGDAGAKGDA) show a composition bias toward low complexity. The segment covering 648–660 (PPGPAGPTGPPGP) has biased composition (pro residues). At lysine 670 the chain carries 5-hydroxylysine. The span at 675–691 (SAGPPGATGFPGAAGRV) shows a compositional bias: low complexity. Residues proline 679 and proline 685 each carry the 4-hydroxyproline modification. Position 693 is a 3-hydroxyproline (proline 693). 4-hydroxyproline occurs at positions 694, 703, 706, 727, 736, 744, 753, 771, 780, 783, 789, 804, 810, 816, 825, and 831. The span at 720–729 (ETGPAGRPGE) shows a compositional bias: low complexity. The segment covering 741–762 (KGSPGADGPAGAPGTPGPQGIA) has biased composition (low complexity). The segment covering 803–813 (PPGPMGPPGLA) has biased composition (pro residues). Positions 815–830 (PPGEAGREGSPGAEGS) are enriched in low complexity. Residue lysine 840 is modified to 5-hydroxylysine. Residues 848–863 (PGPPGAPGAPGAPGPV) are compositionally biased toward pro residues. 4-hydroxyproline is present on residues proline 851, proline 854, and proline 857. Residues 884–898 (AGPAGARGPAGPQGP) are compositionally biased toward low complexity. Basic and acidic residues predominate over residues 899–913 (RGDKGETGEQGDRGI). Residue lysine 902 is modified to 5-hydroxylysine. Lysine 914 is subject to 5-hydroxylysine; alternate. Lysine 914 is a glycosylation site (O-linked (Gal...) hydroxylysine; alternate). 4-hydroxyproline is present on residues proline 929, proline 932, proline 950, and proline 965. Residues 932-965 (PGEQGPSGASGPAGPRGPPGSAGTPGKDGLNGLP) show a composition bias toward low complexity. Position 970 is a 3-hydroxyproline (proline 970). Proline 971 bears the 4-hydroxyproline mark. Over residues 983 to 998 (VGPPGPPGPPGPPGPP) the composition is skewed to pro residues. Proline 985 bears the 3-hydroxyproline mark. Residue proline 986 is modified to 4-hydroxyproline. The residue at position 988 (proline 988) is a 3-hydroxyproline. Proline 989 bears the 4-hydroxyproline mark. Proline 991 carries the post-translational modification 3-hydroxyproline. Proline 992, proline 995, and proline 998 each carry 4-hydroxyproline.

Belongs to the fibrillar collagen family. In terms of assembly, trimers of one alpha 2(I) and two alpha 1(I) chains. Post-translationally, contains mostly 4-hydroxyproline. Proline residues at the third position of the tripeptide repeating unit (G-X-Y) are hydroxylated in some or all of the chains. In terms of processing, contains 3-hydroxyproline at a few sites. This modification occurs on the first proline residue in the sequence motif Gly-Pro-Hyp, where Hyp is 4-hydroxyproline. Lysine residues at the third position of the tripeptide repeating unit (G-X-Y) are 5-hydroxylated in some or all of the chains. Post-translationally, O-glycosylated on hydroxylated lysine residues. The O-linked glycan consists of a Glc-Gal disaccharide. Expressed in bones.

The protein resides in the secreted. It is found in the extracellular space. The protein localises to the extracellular matrix. In terms of biological role, type I collagen is a member of group I collagen (fibrillar forming collagen). The polypeptide is Collagen alpha-1(I) chain (Glyptodon sp. (strain SLP-2019) (Giant armadillo)).